A 412-amino-acid chain; its full sequence is Peptidase T (412 aa).

Residue H78 participates in Zn(2+) binding. D80 is a catalytic residue. D140 contacts Zn(2+). E173 serves as the catalytic Proton acceptor. Zn(2+)-binding residues include E174, D196, and H379.

The protein belongs to the peptidase M20B family. Zn(2+) serves as cofactor.

It is found in the cytoplasm. The catalysed reaction is Release of the N-terminal residue from a tripeptide.. Functionally, cleaves the N-terminal amino acid of tripeptides. The chain is Peptidase T from Edwardsiella ictaluri (strain 93-146).